The following is a 1498-amino-acid chain: ATP-binding cassette sub-family C member 6 (1498 aa).

Residues 1–37 (MNRGRSMATPGEQCAGLRVWNQTEQEPAAYHLLSLCF) are Extracellular-facing. Asn21 is a glycosylation site (N-linked (GlcNAc...) asparagine). Residues 38 to 58 (VRAASSWVPPMYLWVLGPIYL) traverse the membrane as a helical segment. Residues 59–78 (LYIHRHGRCYLRMSHLFKTK) lie on the Cytoplasmic side of the membrane. The chain crosses the membrane as a helical span at residues 79–99 (MVLGLALILLYTFNVAVPLWR). At 100–104 (IHQGV) the chain is on the extracellular side. A helical transmembrane segment spans residues 105–125 (PQAPELLIHPTVWLTTMSFAT). Residues 126-137 (FLIHMERRKGVR) lie on the Cytoplasmic side of the membrane. A helical transmembrane segment spans residues 138-155 (SSGVLFGYWLLCCILPGI). Residues 156 to 173 (NTVQQASAGNFRQEPLHH) lie on the Extracellular side of the membrane. Residues 174–194 (LATYLCLSLVVAELVLSCLVD) traverse the membrane as a helical segment. At 195-300 (QPPFFSEDSQ…RSQRGPLLRA (106 aa)) the chain is on the cytoplasmic side. Residues 301 to 321 (IWRVFRSTFLLGTLSLVISDA) traverse the membrane as a helical segment. The 284-residue stretch at 309–592 (FLLGTLSLVI…LPFSVHCIVQ (284 aa)) folds into the ABC transmembrane type-1 1 domain. The Extracellular segment spans residues 322–347 (FRFAVPKLLSLFLEFMGDRNSSAWTG). Asn341 carries N-linked (GlcNAc...) asparagine glycosylation. The helical transmembrane segment at 348-368 (WLLAVLMFAAACLQTLFEQQH) threads the bilayer. The Cytoplasmic segment spans residues 369–424 (MYRAKVLQMRLRTAITGLVYRKVLVLSSGSRKSSAAGDVVNLVSVDIQRLAESIIY). The helical transmembrane segment at 425–445 (LNGLWLLFLWIFVCFVYLWQL) threads the bilayer. Residues 446–448 (LGP) are Extracellular-facing. A helical transmembrane segment spans residues 449–469 (SALTAVAVFLSLLPLNFFITK). The Cytoplasmic portion of the chain corresponds to 470–531 (KRGFHQEEQM…ALKTSTLLFS (62 aa)). Residues 532 to 552 (VSLVSFQVSTFLVALVVFAVH) traverse the membrane as a helical segment. The Extracellular portion of the chain corresponds to 553 to 574 (TLVAEDNAMDAEKAFVTLTVLS). The helical transmembrane segment at 575-595 (ILNKAQAFLPFSVHCIVQARV) threads the bilayer. Over 596–934 (SFDRLAAFLC…VKTTIYLSYL (339 aa)) the chain is Cytoplasmic. The ABC transporter 1 domain occupies 627–851 (ISVHNGTFAW…NGALVGLLDG (225 aa)). ATP is bound at residue 661 to 668 (GPVGAGKS). Residues 855–910 (PAGTHDAATSDDLGGFPGGGRPTCRPDRPRPTEAAPVKGRSTSEVQMEASLDDPEA) are disordered. The chain crosses the membrane as a helical span at residues 935–955 (RAVGTPLCTYTLFLFLCQQVA). One can recognise an ABC transmembrane type-1 2 domain in the interval 942–1223 (CTYTLFLFLC…VVRSWTDLEN (282 aa)). The Extracellular portion of the chain corresponds to 956-992 (SFSQGYWLSLWADDPVVDGRQMHAALRGWVFGLLGCL). Residues 993–1013 (QAIGLFASMAAVFLGGARASG) form a helical membrane-spanning segment. Residues 1014-1056 (LLFRSLLWDVARSPIGFFERTPVGNLLNRFSKETDTVDVDIPD) lie on the Cytoplasmic side of the membrane. The helical transmembrane segment at 1057–1077 (KLRSLLTYAFGLLEVGLAVTM) threads the bilayer. A topological domain (extracellular) is located at residue Ala1078. The chain crosses the membrane as a helical span at residues 1079-1099 (TPLAIVAILPLMVLYAGFQSL). Residues 1100–1170 (YVATSCQLRR…VADRWLATNL (71 aa)) are Cytoplasmic-facing. The chain crosses the membrane as a helical span at residues 1171-1191 (ELLGNGLVFVAATCAVLSKAH). The Extracellular segment spans residues 1192–1193 (LS). A helical transmembrane segment spans residues 1194–1214 (AGLVGFSVSAALQVTQTLQWV). Residues 1215 to 1498 (VRSWTDLENS…YRLAHESGLA (284 aa)) are Cytoplasmic-facing. The ABC transporter 2 domain occupies 1260–1494 (IEFRDFGLRH…KGLFYRLAHE (235 aa)). Ser1281 carries the post-translational modification Phosphoserine. 1294 to 1301 (GRTGAGKS) is a binding site for ATP.

This sequence belongs to the ABC transporter superfamily. ABCC family. Conjugate transporter (TC 3.A.1.208) subfamily. Glycosylated.

The protein resides in the basolateral cell membrane. The protein localises to the basal cell membrane. It catalyses the reaction an S-substituted glutathione(in) + ATP + H2O = an S-substituted glutathione(out) + ADP + phosphate + H(+). The catalysed reaction is leukotriene C4(in) + ATP + H2O = leukotriene C4(out) + ADP + phosphate + H(+). ATP-dependent transporter of the ATP-binding cassette (ABC) family that actively extrudes physiological compounds, and xenobiotics from cells. Mediates ATP-dependent transport of glutathione conjugates such as leukotriene-c4 (LTC4) and N-ethylmaleimide S-glutathione (NEM-GS) (in vitro), and an anionic cyclopentapeptide endothelin antagonist, BQ-123. May contribute to regulate the transport of organic compounds in testes across the blood-testis-barrier. In terms of biological role, mediates the release of nucleoside triphosphates, predominantly ATP, into the circulation, where it is rapidly converted into AMP and the mineralization inhibitor inorganic pyrophosphate (PPi) by the ecto-enzyme ectonucleotide pyrophosphatase phosphodiesterase 1 (ENPP1), therefore playing a role in PPi homeostasis. The sequence is that of ATP-binding cassette sub-family C member 6 (Abcc6) from Mus musculus (Mouse).